We begin with the raw amino-acid sequence, 221 residues long: Tetraspanin-2 (221 aa).

Residues 1–13 (MGRFRGGLRCIKY) are Cytoplasmic-facing. Residues 14–34 (LLLGFNLLFWLAGSAVIAFGL) form a helical membrane-spanning segment. The Extracellular segment spans residues 35 to 54 (WFRFGGAIKELSSEDKSPEY). The helical transmembrane segment at 55 to 75 (FYVGLYVLVGAGALMMAVGFF) threads the bilayer. The Cytoplasmic segment spans residues 76–90 (GCCGAMRESQCVLGS). Residues 91-111 (FFTCLLVIFAAEVTTGVFAFI) form a helical membrane-spanning segment. At 112 to 188 (GKGVAIRHVQ…ETIISVKLQL (77 aa)) the chain is on the extracellular side. Residue asparagine 139 is glycosylated (N-linked (GlcNAc...) asparagine). Residues 189–209 (IGIVGIGIAGLTIFGMIFSMV) traverse the membrane as a helical segment. At 210 to 221 (LCCAIRNSRDVI) the chain is on the cytoplasmic side.

This sequence belongs to the tetraspanin (TM4SF) family.

The protein localises to the membrane. Functionally, may play a role in signalling in oligodendrocytes in the early stages of their terminal differentiation into myelin-forming glia and may also function in stabilizing the mature sheath. The polypeptide is Tetraspanin-2 (TSPAN2) (Homo sapiens (Human)).